The sequence spans 279 residues: Phycobilisome 34.5 kDa linker polypeptide, phycoerythrocyanin-associated, rod (279 aa).

A PBS-linker domain is found at 2 to 178; it reads STSVAERLAI…LYRGRANSDN (177 aa). In terms of domain architecture, CpcD-like spans 226–278; it reads ARMFIVEAIAGTLNTNVAVRRSRQVYTVPYDRLSATYQEIHKRGGKIVKITPA.

This sequence belongs to the phycobilisome linker protein family.

The protein resides in the cellular thylakoid membrane. Its function is as follows. Rod linker protein, associated with phycoerythrocyanin. Linker polypeptides determine the state of aggregation and the location of the disk-shaped phycobiliprotein units within the phycobilisome and modulate their spectroscopic properties in order to mediate a directed and optimal energy transfer. This is Phycobilisome 34.5 kDa linker polypeptide, phycoerythrocyanin-associated, rod (pecC) from Mastigocladus laminosus (Fischerella sp.).